The primary structure comprises 481 residues: Phosphoenolpyruvate phosphatase (481 aa).

The first 36 residues, 1–36 (MPIYTSRSCFYLLLFHIILLCSVDKTLCRQTSSFVR), serve as a signal peptide directing secretion. N-linked (GlcNAc...) asparagine glycosylation occurs at Asn109. Fe cation is bound by residues Asp168, Asp195, and Tyr198. Residue Asp195 participates in Zn(2+) binding. N-linked (GlcNAc...) asparagine glycosylation is present at Asn206. 2 residues coordinate Zn(2+): Asn232 and His317. Asn232 contributes to the substrate binding site. Residue His327 is the Proton donor of the active site. His354 contributes to the Zn(2+) binding site. 354-356 (HVH) provides a ligand contact to substrate. His356 is a Fe cation binding site. N-linked (GlcNAc...) asparagine glycans are attached at residues Asn370 and Asn427.

The protein belongs to the metallophosphoesterase superfamily. Purple acid phosphatase family.

It is found in the vacuole lumen. It carries out the reaction phosphoenolpyruvate + H2O = pyruvate + phosphate. In terms of biological role, phosphoenolpyruvate phosphatase that probably operates in the vacuole to release phosphate from phosphoenolpyruvate (PEP) under phosphorus starvation. The chain is Phosphoenolpyruvate phosphatase (ACPEPP) from Allium cepa (Onion).